A 225-amino-acid chain; its full sequence is UPF0173 metal-dependent hydrolase Tneu_1348 (225 aa).

It belongs to the UPF0173 family.

This Pyrobaculum neutrophilum (strain DSM 2338 / JCM 9278 / NBRC 100436 / V24Sta) (Thermoproteus neutrophilus) protein is UPF0173 metal-dependent hydrolase Tneu_1348.